The sequence spans 471 residues: Cysteine--tRNA ligase (471 aa).

Cys-30 contributes to the Zn(2+) binding site. Residues 32-42 carry the 'HIGH' region motif; it reads PTVYNFAHIGN. Zn(2+) is bound by residues Cys-212, His-237, and Glu-241. Positions 270 to 274 match the 'KMSKS' region motif; the sequence is KMSKS. An ATP-binding site is contributed by Lys-273.

It belongs to the class-I aminoacyl-tRNA synthetase family. In terms of assembly, monomer. The cofactor is Zn(2+).

It localises to the cytoplasm. It carries out the reaction tRNA(Cys) + L-cysteine + ATP = L-cysteinyl-tRNA(Cys) + AMP + diphosphate. This chain is Cysteine--tRNA ligase, found in Leptospira interrogans serogroup Icterohaemorrhagiae serovar Lai (strain 56601).